The sequence spans 261 residues: tRNA U34 carboxymethyltransferase (261 aa).

Carboxy-S-adenosyl-L-methionine contacts are provided by residues Lys-25, Trp-39, Lys-44, Gly-63, 114-115 (VE), Tyr-135, and Arg-250.

The protein belongs to the class I-like SAM-binding methyltransferase superfamily. CmoB family. As to quaternary structure, homotetramer.

It carries out the reaction carboxy-S-adenosyl-L-methionine + 5-hydroxyuridine(34) in tRNA = 5-carboxymethoxyuridine(34) in tRNA + S-adenosyl-L-homocysteine + H(+). In terms of biological role, catalyzes carboxymethyl transfer from carboxy-S-adenosyl-L-methionine (Cx-SAM) to 5-hydroxyuridine (ho5U) to form 5-carboxymethoxyuridine (cmo5U) at position 34 in tRNAs. This chain is tRNA U34 carboxymethyltransferase, found in Helicobacter pylori (strain ATCC 700392 / 26695) (Campylobacter pylori).